The sequence spans 347 residues: Probable E3 ubiquitin-protein ligase DTX3 (347 aa).

Positions 111 to 157 are disordered; that stretch reads GGEHPELHRPGPPPLRAAPLLPPGARGLPPPPPPLPPPLPPRLREDA. The segment covering 120 to 151 has biased composition (pro residues); the sequence is PGPPPLRAAPLLPPGARGLPPPPPPLPPPLPP. The RING-type zinc-finger motif lies at 164–205; that stretch reads CPICLGEIQNAKTLEKCRHSFCEGCITRALQVKKACPMCGRF.

This sequence belongs to the Deltex family. Homodimer. May form a heterodimer with other members of the Deltex family. Interacts with NOTCH1. Strongly expressed in testis and brain. Weakly expressed in kidney.

It localises to the cytoplasm. It carries out the reaction S-ubiquitinyl-[E2 ubiquitin-conjugating enzyme]-L-cysteine + [acceptor protein]-L-lysine = [E2 ubiquitin-conjugating enzyme]-L-cysteine + N(6)-ubiquitinyl-[acceptor protein]-L-lysine.. It functions in the pathway protein modification; protein ubiquitination. Its function is as follows. Regulator of Notch signaling, a signaling pathway involved in cell-cell communications that regulates a broad spectrum of cell-fate determinations. Probably acts both as a positive and negative regulator of Notch, depending on the developmental and cell context. Functions as a ubiquitin ligase protein in vitro, suggesting that it may regulate the Notch pathway via some ubiquitin ligase activity. This is Probable E3 ubiquitin-protein ligase DTX3 (Dtx3) from Mus musculus (Mouse).